The chain runs to 415 residues: Beta-1,4-glucuronyltransferase 1 (415 aa).

At 1–8 (MQMSYAIR) the chain is on the cytoplasmic side. A helical; Signal-anchor for type II membrane protein transmembrane segment spans residues 9–36 (CAFYQLLLAALMLVAMLQLLYLSLLSGL). Over 37 to 415 (HGQEEQEQYF…ARYPNSPHRC (379 aa)) the chain is Lumenal. N-linked (GlcNAc...) asparagine glycosylation is present at asparagine 204. Residues aspartate 227 and aspartate 229 each contribute to the Mn(2+) site. A glycan (N-linked (GlcNAc...) asparagine) is linked at asparagine 300.

The protein belongs to the glycosyltransferase 49 family. As to quaternary structure, interacts with LARGE1 and LARGE2. Mn(2+) is required as a cofactor.

It localises to the golgi apparatus membrane. The enzyme catalyses 3-O-[beta-D-Xyl-(1-&gt;4)-Rib-ol-P-Rib-ol-P-3-beta-D-GalNAc-(1-&gt;3)-beta-D-GlcNAc-(1-&gt;4)-(O-6-P-alpha-D-Man)]-Thr-[protein] + UDP-alpha-D-glucuronate = 3-O-[beta-D-GlcA-(1-&gt;3)-beta-D-Xyl-(1-&gt;4)-Rib-ol-P-Rib-ol-P-3-beta-D-GalNAc-(1-&gt;3)-beta-D-GlcNAc-(1-&gt;4)-(O-6-P-alpha-D-Man)]-Thr-[protein] + UDP + H(+). Its pathway is protein modification; protein glycosylation. In terms of biological role, beta-1,4-glucuronyltransferase involved in O-mannosylation of alpha-dystroglycan (DAG1). Transfers a glucuronic acid (GlcA) residue onto a xylose (Xyl) acceptor to produce the glucuronyl-beta-1,4-xylose-beta disaccharide primer, which is further elongated by LARGE1, during synthesis of phosphorylated O-mannosyl glycan. Phosphorylated O-mannosyl glycan is a carbohydrate structure present in alpha-dystroglycan (DAG1), which is required for binding laminin G-like domain-containing extracellular proteins with high affinity. Required for axon guidance; via its function in O-mannosylation of alpha-dystroglycan (DAG1). This is Beta-1,4-glucuronyltransferase 1 from Mus musculus (Mouse).